The following is a 167-amino-acid chain: Small ribosomal subunit protein uS3m (167 aa).

A mitochondrion-targeting transit peptide spans 1–35; that stretch reads MVALYCGGGLRPLMLSWSRDLPCIWRALHTSAVCF.

It belongs to the universal ribosomal protein uS3 family. As to quaternary structure, component of the mitochondrial ribosome small subunit (28S) which comprises a 12S rRNA and about 30 distinct proteins.

It localises to the mitochondrion. This is Small ribosomal subunit protein uS3m (MRPS24) from Bos taurus (Bovine).